Reading from the N-terminus, the 162-residue chain is Succinate dehydrogenase assembly factor 2, mitochondrial (162 aa).

The N-terminal 35 residues, 1–35 (MHNMFPALTKTLSLQGYKIINSQTGSAAWSCGRRW), are a transit peptide targeting the mitochondrion.

This sequence belongs to the SDHAF2 family. As to quaternary structure, interacts with the flavoprotein subunit within the SDH catalytic dimer.

The protein localises to the mitochondrion matrix. In terms of biological role, plays an essential role in the assembly of succinate dehydrogenase (SDH), an enzyme complex (also referred to as respiratory complex II) that is a component of both the tricarboxylic acid (TCA) cycle and the mitochondrial electron transport chain, and which couples the oxidation of succinate to fumarate with the reduction of ubiquinone (coenzyme Q) to ubiquinol. Required for flavinylation (covalent attachment of FAD) of the flavoprotein subunit of the SDH catalytic dimer. The protein is Succinate dehydrogenase assembly factor 2, mitochondrial of Saccharomyces cerevisiae (strain RM11-1a) (Baker's yeast).